Here is a 541-residue protein sequence, read N- to C-terminus: Chaperonin GroEL (541 aa).

ATP-binding positions include 29–32 (TLGP), 86–90 (DGTTT), Gly-413, 478–480 (NAA), and Asp-494.

It belongs to the chaperonin (HSP60) family. Forms a cylinder of 14 subunits composed of two heptameric rings stacked back-to-back. Interacts with the co-chaperonin GroES.

It localises to the cytoplasm. It carries out the reaction ATP + H2O + a folded polypeptide = ADP + phosphate + an unfolded polypeptide.. Together with its co-chaperonin GroES, plays an essential role in assisting protein folding. The GroEL-GroES system forms a nano-cage that allows encapsulation of the non-native substrate proteins and provides a physical environment optimized to promote and accelerate protein folding. In Agathobacter rectalis (strain ATCC 33656 / DSM 3377 / JCM 17463 / KCTC 5835 / VPI 0990) (Eubacterium rectale), this protein is Chaperonin GroEL.